The primary structure comprises 483 residues: Phloretin 2'-O-glucosyltransferase (483 aa).

Histidine 15 acts as the Proton acceptor in catalysis. Histidine 15 lines the an anthocyanidin pocket. Aspartate 118 acts as the Charge relay in catalysis. Positions 140, 360, 362, 377, 380, 381, 382, and 385 each coordinate UDP-alpha-D-glucose. An anthocyanidin is bound at residue alanine 400. Positions 401 and 402 each coordinate UDP-alpha-D-glucose.

This sequence belongs to the UDP-glycosyltransferase family.

It catalyses the reaction phloretin + UDP-alpha-D-glucose = phlorizin + UDP + H(+). In terms of biological role, glycosyltransferase that possesses phloretin 2'-O-glycosyltransferase activity. Converts phloretin to phlorizin (phloretin 2'-O-glucoside), a potent antioxidant. Is specific for phloretin and does not possess glycosyltransferase activity toward naringenin, naringenin chalcone, eriodictyol, eriodictyol chalcone, apigenin, luteolin, kaempferol, quercetin, isoliquiritigenin, butein, caffeic acid, 2-coumaric acid, 3-coumaric acid, 3-hydroxybenzoic acid, 3,4-dihydroxybenzoic acid and 3,4-dihydroxyhydrocinnamic acid. Can glycosylate phloretin in the presence of UDP-glucose, UDP-xylose and UDP-galactose. This chain is Phloretin 2'-O-glucosyltransferase, found in Pyrus communis (Pear).